The primary structure comprises 205 residues: Nitrophorin-4 (205 aa).

The first 21 residues, 1 to 21 (MKSYTSLLAVAILCLFGGVNG), serve as a signal peptide directing secretion. 2 cysteine pairs are disulfide-bonded: Cys-23-Cys-143 and Cys-62-Cys-192. Position 80 (His-80) interacts with heme.

The protein belongs to the calycin superfamily. Nitrophorin family. Heme b serves as cofactor. As to expression, salivary gland (at protein level).

It localises to the secreted. It carries out the reaction 3 nitrite + 2 H(+) = 2 nitric oxide + nitrate + H2O. Heme-based protein that delivers nitric oxide gas (NO) to the victim while feeding, resulting in vasodilation and inhibition of platelet aggregation. Reversibly binds nitric oxide (NO). Also binds tightly to histamine, which is released by the host to induce wound healing. NO release is pH dependent and linked to loop dynamics. In Rhodnius prolixus (Triatomid bug), this protein is Nitrophorin-4.